The chain runs to 618 residues: Isocitrate dehydrogenase kinase/phosphatase (618 aa).

ATP contacts are provided by residues 332 to 338 (APGIKGM) and Lys-353. Asp-388 is a catalytic residue.

This sequence belongs to the AceK family.

It is found in the cytoplasm. The catalysed reaction is L-seryl-[isocitrate dehydrogenase] + ATP = O-phospho-L-seryl-[isocitrate dehydrogenase] + ADP + H(+). Functionally, bifunctional enzyme which can phosphorylate or dephosphorylate isocitrate dehydrogenase (IDH) on a specific serine residue. This is a regulatory mechanism which enables bacteria to bypass the Krebs cycle via the glyoxylate shunt in response to the source of carbon. When bacteria are grown on glucose, IDH is fully active and unphosphorylated, but when grown on acetate or ethanol, the activity of IDH declines drastically concomitant with its phosphorylation. The sequence is that of Isocitrate dehydrogenase kinase/phosphatase from Methylibium petroleiphilum (strain ATCC BAA-1232 / LMG 22953 / PM1).